The chain runs to 111 residues: MEAKAKLSMIRISPRKMRLVADTIRNKAVLVAVATLKNLNKDAAEPILKLLNSAVANAVNNNGMEADKLYVKTIFVNEGPTLKRFRPRAHGRAYEIFKRTSHVVIVVSDEK.

Belongs to the universal ribosomal protein uL22 family. In terms of assembly, part of the 50S ribosomal subunit.

This protein binds specifically to 23S rRNA; its binding is stimulated by other ribosomal proteins, e.g. L4, L17, and L20. It is important during the early stages of 50S assembly. It makes multiple contacts with different domains of the 23S rRNA in the assembled 50S subunit and ribosome. In terms of biological role, the globular domain of the protein is located near the polypeptide exit tunnel on the outside of the subunit, while an extended beta-hairpin is found that lines the wall of the exit tunnel in the center of the 70S ribosome. The polypeptide is Large ribosomal subunit protein uL22 (Mycoplasma mycoides subsp. mycoides SC (strain CCUG 32753 / NCTC 10114 / PG1)).